The chain runs to 242 residues: Uridylate kinase (242 aa).

ATP is bound by residues 15-18 (KISG), Gly58, and Arg62. Residues Asp77 and 139–146 (TGNPFFTT) contribute to the UMP site. 3 residues coordinate ATP: Thr166, Tyr172, and Asp175.

Belongs to the UMP kinase family. In terms of assembly, homohexamer.

It localises to the cytoplasm. The catalysed reaction is UMP + ATP = UDP + ADP. The protein operates within pyrimidine metabolism; CTP biosynthesis via de novo pathway; UDP from UMP (UMPK route): step 1/1. Inhibited by UTP. In terms of biological role, catalyzes the reversible phosphorylation of UMP to UDP. This is Uridylate kinase from Buchnera aphidicola subsp. Acyrthosiphon pisum (strain APS) (Acyrthosiphon pisum symbiotic bacterium).